The sequence spans 635 residues: Sodium- and chloride-dependent creatine transporter 1 (635 aa).

Residues Met1 to Asp35 are disordered. The Cytoplasmic segment spans residues Met1–Asp60. Residues Pro25–Asp35 show a composition bias toward low complexity. A helical membrane pass occupies residues Phe61–Leu81. The Extracellular portion of the chain corresponds to Cys82–Gly87. The chain crosses the membrane as a helical span at residues Gly88–Leu108. Residues Glu109–Met138 lie on the Cytoplasmic side of the membrane. A helical transmembrane segment spans residues Val139–Leu159. Residues Val160 to Ala230 are Extracellular-facing. Asn192 and Asn197 each carry an N-linked (GlcNAc...) asparagine glycan. The chain crosses the membrane as a helical span at residues Leu231 to Trp251. Topologically, residues Lys252–Tyr269 are cytoplasmic. Residues Val270 to Ile290 traverse the membrane as a helical segment. Over Tyr291–Gln304 the chain is Extracellular. A helical transmembrane segment spans residues Val305–Thr325. The Cytoplasmic segment spans residues Ala326 to Ala341. A helical transmembrane segment spans residues Ile342–Ile362. The Extracellular segment spans residues Leu363 to Thr394. The helical transmembrane segment at Leu395–Leu415 threads the bilayer. Over Asp416–Glu444 the chain is Cytoplasmic. Residues Ile445 to Ala465 traverse the membrane as a helical segment. Topologically, residues Gly466 to Ser479 are extracellular. A helical membrane pass occupies residues Gly480–Ala500. Residues Asp501–Lys520 lie on the Cytoplasmic side of the membrane. A helical membrane pass occupies residues Trp521 to Tyr541. Over Tyr542–Met560 the chain is Extracellular. Residue Asn548 is glycosylated (N-linked (GlcNAc...) asparagine). Residues Gly561–Leu581 traverse the membrane as a helical segment. The Cytoplasmic segment spans residues Arg582–Met635. Thr617 and Thr620 each carry phosphothreonine. Ser623 bears the Phosphoserine mark.

The protein belongs to the sodium:neurotransmitter symporter (SNF) (TC 2.A.22) family. SLC6A8 subfamily. In terms of processing, glycosylated. Prominent in kidney, heart, and muscle, also present in brain, but not in liver and intestine.

It localises to the cell membrane. Its subcellular location is the apical cell membrane. It carries out the reaction creatine(out) + chloride(out) + 2 Na(+)(out) = creatine(in) + chloride(in) + 2 Na(+)(in). Creatine:sodium symporter which mediates the uptake of creatine. Plays an important role in supplying creatine to the brain via the blood-brain barrier. In Oryctolagus cuniculus (Rabbit), this protein is Sodium- and chloride-dependent creatine transporter 1 (SLC6A8).